We begin with the raw amino-acid sequence, 822 residues long: Putative ESX-1 scaffolding and assembly protein SaeB (822 aa).

In terms of biological role, may be involved in assembly of the ESX-1 / type VII specialized secretion system (T7SS), which exports several proteins including EsxA and EsxB. Involved in DNA conjugation in recipient (MKD8) but not donor (mc(2)155) strain. In Mycolicibacterium smegmatis (strain MKD8) (Mycobacterium smegmatis), this protein is Putative ESX-1 scaffolding and assembly protein SaeB (saeB).